A 130-amino-acid chain; its full sequence is Glycine cleavage system H protein (130 aa).

Residues 28–110 form the Lipoyl-binding domain; it reads TVRIGITSVA…FGEGWLFEVE (83 aa). K69 is subject to N6-lipoyllysine.

Belongs to the GcvH family. As to quaternary structure, the glycine cleavage system is composed of four proteins: P, T, L and H. (R)-lipoate serves as cofactor.

The glycine cleavage system catalyzes the degradation of glycine. The H protein shuttles the methylamine group of glycine from the P protein to the T protein. In Corynebacterium aurimucosum (strain ATCC 700975 / DSM 44827 / CIP 107346 / CN-1) (Corynebacterium nigricans), this protein is Glycine cleavage system H protein.